Here is a 112-residue protein sequence, read N- to C-terminus: Putative pterin-4-alpha-carbinolamine dehydratase (112 aa).

A disordered region spans residues 1-30; sequence MSDELQSRTCTPCRGDVPPMTKAEAKRQLA.

The protein belongs to the pterin-4-alpha-carbinolamine dehydratase family.

It carries out the reaction (4aS,6R)-4a-hydroxy-L-erythro-5,6,7,8-tetrahydrobiopterin = (6R)-L-erythro-6,7-dihydrobiopterin + H2O. The polypeptide is Putative pterin-4-alpha-carbinolamine dehydratase (Aromatoleum aromaticum (strain DSM 19018 / LMG 30748 / EbN1) (Azoarcus sp. (strain EbN1))).